The sequence spans 592 residues: NADH-quinone oxidoreductase subunit C/D (592 aa).

The tract at residues 1-183 is NADH dehydrogenase I subunit C; the sequence is MSAAQSPTAQ…DPYTLTVEGQ (183 aa). Residues 207 to 592 form an NADH dehydrogenase I subunit D region; the sequence is DYMFLNLGPN…IDFVMADVDR (386 aa).

This sequence in the N-terminal section; belongs to the complex I 30 kDa subunit family. It in the C-terminal section; belongs to the complex I 49 kDa subunit family. NDH-1 is composed of 13 different subunits. Subunits NuoB, CD, E, F, and G constitute the peripheral sector of the complex.

The protein localises to the cell inner membrane. The enzyme catalyses a quinone + NADH + 5 H(+)(in) = a quinol + NAD(+) + 4 H(+)(out). In terms of biological role, NDH-1 shuttles electrons from NADH, via FMN and iron-sulfur (Fe-S) centers, to quinones in the respiratory chain. The immediate electron acceptor for the enzyme in this species is believed to be ubiquinone. Couples the redox reaction to proton translocation (for every two electrons transferred, four hydrogen ions are translocated across the cytoplasmic membrane), and thus conserves the redox energy in a proton gradient. This is NADH-quinone oxidoreductase subunit C/D from Chromohalobacter salexigens (strain ATCC BAA-138 / DSM 3043 / CIP 106854 / NCIMB 13768 / 1H11).